The chain runs to 238 residues: tRNA1(Val) (adenine(37)-N6)-methyltransferase (238 aa).

Belongs to the methyltransferase superfamily. tRNA (adenine-N(6)-)-methyltransferase family.

It localises to the cytoplasm. It catalyses the reaction adenosine(37) in tRNA1(Val) + S-adenosyl-L-methionine = N(6)-methyladenosine(37) in tRNA1(Val) + S-adenosyl-L-homocysteine + H(+). Specifically methylates the adenine in position 37 of tRNA(1)(Val) (anticodon cmo5UAC). The polypeptide is tRNA1(Val) (adenine(37)-N6)-methyltransferase (Shewanella baltica (strain OS223)).